The sequence spans 380 residues: Endo-chitosanase C (380 aa).

An N-terminal signal peptide occupies residues 1 to 22; the sequence is MPIKSFASRLALSLAICGTAMG. One copy of the R3-1 repeat lies at 276–304; the sequence is CSWPGHCAGATCSSNDDCSDDLTCQNGKC. The R3-2 repeat unit spans residues 311-341; that stretch reads ETCSWEGHCKGATCSSNDDCSDELACISGIC. Residues 348–378 form an R3-3 repeat; it reads ETCEWEGHCEGASCSSHDDCDGNLACKNGKC.

The protein belongs to the glycosyl hydrolase 75 family.

The protein resides in the secreted. The catalysed reaction is Endohydrolysis of beta-(1-&gt;4)-linkages between D-glucosamine residues in a partly acetylated chitosan.. Functionally, chitosanase catalyzing the endo-type cleavage of chitosan, the deacylated form of chitin. Chitosanase may be crucial in the degradation of the deacetylated portion of chitin in the fungal cell wall. Chitoolisaccharides produced by the hydrolysis of partially N-acetylated chitosan are known to have many biological activities, including antibacterial activity, immune-enhancing effects, and elicitor activity. This is Endo-chitosanase C (csnC) from Aspergillus oryzae (Yellow koji mold).